The primary structure comprises 170 residues: Photosystem I assembly protein Ycf3 (170 aa).

TPR repeat units follow at residues 35–68 (AFTY…EIDP), 72–105 (SYIL…NPFL), and 120–153 (GEQA…TPGN).

The protein belongs to the Ycf3 family.

It is found in the plastid. Its subcellular location is the chloroplast thylakoid membrane. Functionally, essential for the assembly of the photosystem I (PSI) complex. May act as a chaperone-like factor to guide the assembly of the PSI subunits. The sequence is that of Photosystem I assembly protein Ycf3 from Oryza nivara (Indian wild rice).